Here is a 95-residue protein sequence, read N- to C-terminus: Protein RnfH (95 aa).

The protein belongs to the UPF0125 (RnfH) family.

This is Protein RnfH from Erwinia tasmaniensis (strain DSM 17950 / CFBP 7177 / CIP 109463 / NCPPB 4357 / Et1/99).